The chain runs to 208 residues: Large ribosomal subunit protein bL25 (208 aa).

The interval D163–E208 is disordered. Basic and acidic residues predominate over residues P198–E208.

This sequence belongs to the bacterial ribosomal protein bL25 family. CTC subfamily. Part of the 50S ribosomal subunit; part of the 5S rRNA/L5/L18/L25 subcomplex. Contacts the 5S rRNA. Binds to the 5S rRNA independently of L5 and L18.

Functionally, this is one of the proteins that binds to the 5S RNA in the ribosome where it forms part of the central protuberance. The sequence is that of Large ribosomal subunit protein bL25 from Bacillus licheniformis (strain ATCC 14580 / DSM 13 / JCM 2505 / CCUG 7422 / NBRC 12200 / NCIMB 9375 / NCTC 10341 / NRRL NRS-1264 / Gibson 46).